The primary structure comprises 346 residues: Threonylcarbamoyl-AMP synthase (346 aa).

A YrdC-like domain is found at 18–205 (DPQIAQAAAL…IPVLLRPGGI (188 aa)). L-threonine is bound at residue T40. 2 residues coordinate ATP: R63 and N67. H72 is an L-threonine binding site. T123 is an ATP binding site. L-threonine-binding residues include R127 and A147. Positions 149 and 157 each coordinate ATP. Position 187 (S187) interacts with L-threonine. ATP is bound by residues R201 and Y240.

This sequence belongs to the SUA5 family.

It is found in the cytoplasm. It catalyses the reaction L-threonine + hydrogencarbonate + ATP = L-threonylcarbamoyladenylate + diphosphate + H2O. Required for the formation of a threonylcarbamoyl group on adenosine at position 37 (t(6)A37) in tRNAs that read codons beginning with adenine. Catalyzes the conversion of L-threonine, HCO(3)(-)/CO(2) and ATP to give threonylcarbamoyl-AMP (TC-AMP) as the acyladenylate intermediate, with the release of diphosphate. Is also able to catalyze the reverse reaction in vitro, i.e. the formation of ATP from TC-AMP and PPi. The polypeptide is Threonylcarbamoyl-AMP synthase (ywlC) (Bacillus subtilis (strain 168)).